The chain runs to 146 residues: Large-conductance mechanosensitive channel (146 aa).

3 helical membrane passes run 21–41 (VGII…ADLI), 44–64 (VIGL…LGDG), and 83–103 (GAFI…FLLV).

The protein belongs to the MscL family. In terms of assembly, homopentamer.

It localises to the cell inner membrane. Channel that opens in response to stretch forces in the membrane lipid bilayer. May participate in the regulation of osmotic pressure changes within the cell. The protein is Large-conductance mechanosensitive channel of Cereibacter sphaeroides (strain ATCC 17025 / ATH 2.4.3) (Rhodobacter sphaeroides).